Consider the following 505-residue polypeptide: Tyrosine-protein kinase FRK (505 aa).

Phosphoserine occurs at positions 37 and 40. One can recognise an SH3 domain in the interval 42-110 (RHGHYFVALF…PSNYVAEDRS (69 aa)). Positions 116–208 (WFFGAIGRSD…GLCVKLGKPC (93 aa)) constitute an SH2 domain. Phosphothreonine is present on Thr-178. The 258-residue stretch at 234–491 (IQLLKRLGSG…TLRWKLEDYF (258 aa)) folds into the Protein kinase domain. Residues 240 to 248 (LGSGQFGEV) and Lys-262 each bind ATP. The active-site Proton acceptor is the Asp-354. Tyr-387 carries the post-translational modification Phosphotyrosine; by autocatalysis.

The protein belongs to the protein kinase superfamily. Tyr protein kinase family. SRC subfamily. In terms of assembly, interacts (via the SH3-domain) with PTEN. Interacts with RB1. As to expression, predominantly expressed in epithelial derived cell lines and tissues, especially normal liver, kidney, breast and colon.

Its subcellular location is the cytoplasm. The protein localises to the nucleus. The enzyme catalyses L-tyrosyl-[protein] + ATP = O-phospho-L-tyrosyl-[protein] + ADP + H(+). Functionally, non-receptor tyrosine-protein kinase that negatively regulates cell proliferation. Positively regulates PTEN protein stability through phosphorylation of PTEN on 'Tyr-336', which in turn prevents its ubiquitination and degradation, possibly by reducing its binding to NEDD4. May function as a tumor suppressor. This Homo sapiens (Human) protein is Tyrosine-protein kinase FRK (FRK).